A 319-amino-acid chain; its full sequence is uncharacterized protein (319 aa).

This is an uncharacterized protein from Bacillus subtilis (strain 168).